The primary structure comprises 574 residues: PI-PLC X domain-containing protein DDB_G0269228 (574 aa).

Positions Met-1–Lys-42 are disordered. Residues Thr-21–Ser-34 are compositionally biased toward low complexity. The PI-PLC X-box domain maps to Gly-270–Gly-449.

This Dictyostelium discoideum (Social amoeba) protein is PI-PLC X domain-containing protein DDB_G0269228.